We begin with the raw amino-acid sequence, 120 residues long: MALNIEEIIASVKEASVLELNDLVKAIEEEFGVTAAAPVAVAAAGGAAAEQTEFTVELASAGDSKIKVIKVVREITGLGLKEAKELVDNAPKALKEGIAKDEAEEIKAKLEEVGANVEVK.

The protein belongs to the bacterial ribosomal protein bL12 family. Homodimer. Part of the ribosomal stalk of the 50S ribosomal subunit. Forms a multimeric L10(L12)X complex, where L10 forms an elongated spine to which 2 to 4 L12 dimers bind in a sequential fashion. Binds GTP-bound translation factors.

In terms of biological role, forms part of the ribosomal stalk which helps the ribosome interact with GTP-bound translation factors. Is thus essential for accurate translation. The chain is Large ribosomal subunit protein bL12 from Listeria monocytogenes serovar 1/2a (strain ATCC BAA-679 / EGD-e).